Here is a 150-residue protein sequence, read N- to C-terminus: Dynein light chain Tctex-type protein 2B (150 aa).

Belongs to the dynein light chain Tctex-type family.

The protein resides in the dynein axonemal particle. Its function is as follows. Acts as one of several non-catalytic accessory components of the cytoplasmic dynein 2 complex (dynein-2 complex), a motor protein complex that drives the movement of cargos along microtubules within cilia and flagella in concert with the intraflagellar transport (IFT) system. Required for proper retrograde ciliary transport. The chain is Dynein light chain Tctex-type protein 2B (dynlt2b) from Danio rerio (Zebrafish).